The following is a 442-amino-acid chain: Proline--tRNA ligase (442 aa).

Belongs to the class-II aminoacyl-tRNA synthetase family. ProS type 2 subfamily. In terms of assembly, homodimer.

The protein localises to the cytoplasm. The catalysed reaction is tRNA(Pro) + L-proline + ATP = L-prolyl-tRNA(Pro) + AMP + diphosphate. Catalyzes the attachment of proline to tRNA(Pro) in a two-step reaction: proline is first activated by ATP to form Pro-AMP and then transferred to the acceptor end of tRNA(Pro). This Brucella melitensis biotype 2 (strain ATCC 23457) protein is Proline--tRNA ligase.